We begin with the raw amino-acid sequence, 690 residues long: Elongation factor G (690 aa).

A tr-type G domain is found at 8–283 (SKCRNIGIMA…AVVDFLPAPN (276 aa)). GTP is bound by residues 17 to 24 (AHIDAGKT), 81 to 85 (DTPGH), and 135 to 138 (NKMD).

This sequence belongs to the TRAFAC class translation factor GTPase superfamily. Classic translation factor GTPase family. EF-G/EF-2 subfamily.

It is found in the cytoplasm. Catalyzes the GTP-dependent ribosomal translocation step during translation elongation. During this step, the ribosome changes from the pre-translocational (PRE) to the post-translocational (POST) state as the newly formed A-site-bound peptidyl-tRNA and P-site-bound deacylated tRNA move to the P and E sites, respectively. Catalyzes the coordinated movement of the two tRNA molecules, the mRNA and conformational changes in the ribosome. The protein is Elongation factor G of Ehrlichia chaffeensis (strain ATCC CRL-10679 / Arkansas).